The sequence spans 239 residues: tRNA (guanine-N(1)-)-methyltransferase (239 aa).

S-adenosyl-L-methionine contacts are provided by residues G110 and I130–L135.

It belongs to the RNA methyltransferase TrmD family. Homodimer.

Its subcellular location is the cytoplasm. The enzyme catalyses guanosine(37) in tRNA + S-adenosyl-L-methionine = N(1)-methylguanosine(37) in tRNA + S-adenosyl-L-homocysteine + H(+). Specifically methylates guanosine-37 in various tRNAs. The chain is tRNA (guanine-N(1)-)-methyltransferase from Borrelia garinii subsp. bavariensis (strain ATCC BAA-2496 / DSM 23469 / PBi) (Borreliella bavariensis).